The chain runs to 208 residues: uncharacterized protein (208 aa).

Positions 124–208 (KKTGSSNART…PSFGKYSSLA (85 aa)) are disordered. A compositionally biased stretch (basic and acidic residues) spans 133-170 (TPDEGKKAKNAPEEEKVKTSGSEDAKGEESAVEGKEPE).

The protein localises to the golgi apparatus. This is an uncharacterized protein from Encephalitozoon cuniculi (strain GB-M1) (Microsporidian parasite).